Consider the following 592-residue polypeptide: MGGPHHQHQQHQQQQQVVGGGNGHGGGAPVHMRAPPNSQQLPPQMPRSQNYANGSSSAASVAAAPPTPRSAFPGAPLTASAVALKGAIPQRPPAMTSPAAAAAGAALAAGAPYRGATSWTPQGYAPAAAAAAAAVAQQAYRYTAPLPQPAYAAYTPHTATTPATTTYGQRVPTAASPSNTNSSSSSNTGSQSGTLSTSLSNTTNTNTTMGPNGTAQNQNQQGGEQLSKTNLYIRGLQQGTTDKDLINMCAQYGTIISTKAILDKTTNKCKGYGFVDFEQPAYAEGAVKGLQAKGVQAQMAKVGIWVLHRPAIQQEQDPTNLYIANLPPHFKETDLEAMLAKFGQVVSTRILRDQQMNSKGVGFARMESREKCEQIIQMFNGNTITGAKDPLLVKFADGGPKKKNLFKTPDPNARAWRDVSAEGIPVAYDPTMQQNGVSVNVGTPIGVPYSRFGAPQVGGYPVAGSQWIPGYMMTQPITQVDDQYSSSALQYMQMAAAPQLGVTSYKPQEVNQVPARGISMMVSGDTAVPYGTMMPQLATLQIGNSYISPTYPYYAPPPTILPTMPMTDSEQASTAASPDEAYTQYPHQAAPK.

A disordered region spans residues 1–68 (MGGPHHQHQQ…ASVAAAPPTP (68 aa)). The segment covering 18 to 28 (VGGGNGHGGGA) has biased composition (gly residues). Residues 36–54 (PNSQQLPPQMPRSQNYANG) are compositionally biased toward polar residues. Positions 55-64 (SSSAASVAAA) are enriched in low complexity. A phosphotyrosine mark is found at Tyr-124 and Tyr-140. Residues 162–224 (PATTTYGQRV…AQNQNQQGGE (63 aa)) form a disordered region. Residues 176-224 (SPSNTNSSSSSNTGSQSGTLSTSLSNTTNTNTTMGPNGTAQNQNQQGGE) are compositionally biased toward low complexity. RRM domains are found at residues 229–307 (TNLY…IWVL) and 319–398 (TNLY…FADG). The disordered stretch occupies residues 565–592 (PMTDSEQASTAASPDEAYTQYPHQAAPK).

Has a role in the perception of gravity. The polypeptide is Protein alan shepard (Drosophila mojavensis (Fruit fly)).